The primary structure comprises 581 residues: Protein phosphatase 2C 70 (581 aa).

Topologically, residues 1 to 7 (MAMIGMN) are extracellular. A helical transmembrane segment spans residues 8–28 (IIGLFMVLMLLLISLIILFAC). Over 29–581 (KPWRYFSRFR…IIYLDFDTSL (553 aa)) the chain is Cytoplasmic. Residues 208-259 (VKLGRVSPSDLALKDSEVSGKHAQITWNSTKFKWELVDMGSLNGTLVNSHSI) enclose the FHA domain. The PPM-type phosphatase domain occupies 304–577 (KIGVASDPMA…DNTSIIYLDF (274 aa)). Residues D346, G347, D521, and D568 each contribute to the Mn(2+) site.

Association of RLK5 with kapp domain is dependent on phosphorylation of RLK5 and can be abolished by dephosphorylation. Interacts with SERK1 and CDC48A. Component of the SERK1 signaling complex, composed of KAPP, CDC48A, GRF6 or GRF7, SERK1, SERK2, SERK3/BAK1 and BRI1. Interacts with CLV1. Mg(2+) is required as a cofactor. The cofactor is Mn(2+). Expressed in all tissues examined.

It localises to the cell membrane. It carries out the reaction O-phospho-L-seryl-[protein] + H2O = L-seryl-[protein] + phosphate. The enzyme catalyses O-phospho-L-threonyl-[protein] + H2O = L-threonyl-[protein] + phosphate. Dephosphorylates the Ser/Thr receptor-like kinase RLK5. May function as a signaling component in a pathway involving RLK5. Binds and dephosphorylates CLAVATA1 (CLV1). Functions as a negative regulator of the CLV1 signaling in plant development. Dephosphorylates SERK1 receptor kinase on threonine residues in the A-loop. Dephosphorylation of SERK1 controls SERK1 internalization. Component of a signaling pathway which mediates adaptation to NaCl stress. Is not a component of the SALT OVERLY SENSITIVE (SOS) pathway. The chain is Protein phosphatase 2C 70 from Arabidopsis thaliana (Mouse-ear cress).